Here is a 157-residue protein sequence, read N- to C-terminus: Ribosomal RNA large subunit methyltransferase H (157 aa).

S-adenosyl-L-methionine-binding positions include Leu-73, Gly-105, and 124 to 129 (LSQMTF).

It belongs to the RNA methyltransferase RlmH family. As to quaternary structure, homodimer.

The protein resides in the cytoplasm. It catalyses the reaction pseudouridine(1915) in 23S rRNA + S-adenosyl-L-methionine = N(3)-methylpseudouridine(1915) in 23S rRNA + S-adenosyl-L-homocysteine + H(+). Specifically methylates the pseudouridine at position 1915 (m3Psi1915) in 23S rRNA. This is Ribosomal RNA large subunit methyltransferase H from Flavobacterium psychrophilum (strain ATCC 49511 / DSM 21280 / CIP 103535 / JIP02/86).